We begin with the raw amino-acid sequence, 304 residues long: MDGNVQEELELEKSIRRFREKFHGKVTLETAVALMRRFTNNHDQVCKYIILCMDNDTDLDVRNDLRNDPVARNVINKIKSDDQKAKEMPKDKDIKDLAKRMNTLPLTEKNLKMFNDAAENRIPSRDRQFACKECDFVWWRRVPQRKEVSRCHRCRKKFDPVPENKMWGIAEYHCPVCRRMFRGFGQIEVSSPCYVCRNPVLPSCILPPRRNQGPRTRNTHSCLAENCYNRRVPFVAGLQCAHPKSRIMNQLPKVLHPSEPHISTGSTIATCLSQGSLTENDIDDIILDDIKEEEEDEGSDDSDG.

The Nuclear localization signal motif lies at 140–156 (RRVPQRKEVSRCHRCRK). The Nuclear export signal signature appears at 278–287 (TENDIDDIIL).

The protein belongs to the SHFL family.

It is found in the cytoplasm. Its subcellular location is the nucleus. The protein localises to the P-body. Inhibits programmed -1 ribosomal frameshifting (-1PRF) of a variety of mRNAs from viruses and cellular genes. Interacts with the -1PRF signal of target mRNA and translating ribosomes and causes premature translation termination at the frameshifting site. May exhibit antiviral activity. This chain is Shiftless antiviral inhibitor of ribosomal frameshifting protein homolog (shfl), found in Xenopus tropicalis (Western clawed frog).